Consider the following 456-residue polypeptide: Bifunctional protein GlmU (456 aa).

The interval 1-229 is pyrophosphorylase; sequence MLNNAMSVVI…LSEVEGVNNR (229 aa). UDP-N-acetyl-alpha-D-glucosamine-binding positions include 11–14, Lys25, Gln76, 81–82, 103–105, Gly140, Glu154, Asn169, and Asn227; these read LAAG, GT, and YGD. Asp105 is a binding site for Mg(2+). Asn227 provides a ligand contact to Mg(2+). The linker stretch occupies residues 230–250; the sequence is LQLSRLERVYQSEQAEKLLLA. The tract at residues 251 to 456 is N-acetyltransferase; that stretch reads GVMLRDPARF…EGWRRPVKKK (206 aa). Arg333 and Lys351 together coordinate UDP-N-acetyl-alpha-D-glucosamine. Residue His363 is the Proton acceptor of the active site. Positions 366 and 377 each coordinate UDP-N-acetyl-alpha-D-glucosamine. Acetyl-CoA contacts are provided by residues Ala380, 386-387, Ser405, Ala423, and Arg440; that span reads NY.

It in the N-terminal section; belongs to the N-acetylglucosamine-1-phosphate uridyltransferase family. The protein in the C-terminal section; belongs to the transferase hexapeptide repeat family. In terms of assembly, homotrimer. It depends on Mg(2+) as a cofactor.

Its subcellular location is the cytoplasm. It catalyses the reaction alpha-D-glucosamine 1-phosphate + acetyl-CoA = N-acetyl-alpha-D-glucosamine 1-phosphate + CoA + H(+). The enzyme catalyses N-acetyl-alpha-D-glucosamine 1-phosphate + UTP + H(+) = UDP-N-acetyl-alpha-D-glucosamine + diphosphate. It participates in nucleotide-sugar biosynthesis; UDP-N-acetyl-alpha-D-glucosamine biosynthesis; N-acetyl-alpha-D-glucosamine 1-phosphate from alpha-D-glucosamine 6-phosphate (route II): step 2/2. The protein operates within nucleotide-sugar biosynthesis; UDP-N-acetyl-alpha-D-glucosamine biosynthesis; UDP-N-acetyl-alpha-D-glucosamine from N-acetyl-alpha-D-glucosamine 1-phosphate: step 1/1. Its pathway is bacterial outer membrane biogenesis; LPS lipid A biosynthesis. Catalyzes the last two sequential reactions in the de novo biosynthetic pathway for UDP-N-acetylglucosamine (UDP-GlcNAc). The C-terminal domain catalyzes the transfer of acetyl group from acetyl coenzyme A to glucosamine-1-phosphate (GlcN-1-P) to produce N-acetylglucosamine-1-phosphate (GlcNAc-1-P), which is converted into UDP-GlcNAc by the transfer of uridine 5-monophosphate (from uridine 5-triphosphate), a reaction catalyzed by the N-terminal domain. The polypeptide is Bifunctional protein GlmU (Escherichia fergusonii (strain ATCC 35469 / DSM 13698 / CCUG 18766 / IAM 14443 / JCM 21226 / LMG 7866 / NBRC 102419 / NCTC 12128 / CDC 0568-73)).